A 180-amino-acid chain; its full sequence is Shikimate kinase (180 aa).

14–19 contacts ATP; the sequence is GAGKSC. Mg(2+) is bound at residue Ser-18. The substrate site is built by Asp-36, Arg-60, and Gly-82. An ATP-binding site is contributed by Arg-120. Substrate is bound at residue Arg-139.

The protein belongs to the shikimate kinase family. In terms of assembly, monomer. Mg(2+) serves as cofactor.

It is found in the cytoplasm. It carries out the reaction shikimate + ATP = 3-phosphoshikimate + ADP + H(+). It participates in metabolic intermediate biosynthesis; chorismate biosynthesis; chorismate from D-erythrose 4-phosphate and phosphoenolpyruvate: step 5/7. Functionally, catalyzes the specific phosphorylation of the 3-hydroxyl group of shikimic acid using ATP as a cosubstrate. In Xanthomonas axonopodis pv. citri (strain 306), this protein is Shikimate kinase.